A 352-amino-acid chain; its full sequence is 4-hydroxy-2-oxovalerate aldolase (352 aa).

The 253-residue stretch at 14–266 (VRMTDTSLRD…KTGIDFFDIA (253 aa)) folds into the Pyruvate carboxyltransferase domain. 22 to 23 (RD) is a binding site for substrate. Residue aspartate 23 coordinates Mn(2+). The active-site Proton acceptor is histidine 26. Substrate is bound by residues serine 176 and histidine 205. Mn(2+) contacts are provided by histidine 205 and histidine 207. Tyrosine 296 is a binding site for substrate.

Belongs to the 4-hydroxy-2-oxovalerate aldolase family.

It catalyses the reaction (S)-4-hydroxy-2-oxopentanoate = acetaldehyde + pyruvate. In Mycolicibacterium gilvum (strain PYR-GCK) (Mycobacterium gilvum (strain PYR-GCK)), this protein is 4-hydroxy-2-oxovalerate aldolase.